The following is a 282-amino-acid chain: Snake venom serine protease NaSP (282 aa).

The first 18 residues, 1–18 (MVLIRVLASLLILQLSYS), serve as a signal peptide directing secretion. Positions 19–56 (KSLDDGAKESAYDDEIQQSSWGNSTVNTTLTETVVIQL) are excised as a propeptide. 2 N-linked (GlcNAc...) asparagine glycosylation sites follow: asparagine 41 and asparagine 45. The Peptidase S1 domain occupies 57–280 (IMGGSECYKS…YIDWIRGIIA (224 aa)). 5 disulfide bridges follow: cysteine 63–cysteine 195, cysteine 82–cysteine 98, cysteine 174–cysteine 241, cysteine 206–cysteine 220, and cysteine 231–cysteine 256. Histidine 97 (charge relay system) is an active-site residue. Residue asparagine 135 is glycosylated (N-linked (GlcNAc...) asparagine). Aspartate 142 serves as the catalytic Charge relay system. 2 N-linked (GlcNAc...) asparagine glycosylation sites follow: asparagine 149 and asparagine 153. The active-site Charge relay system is the serine 235.

The protein belongs to the peptidase S1 family. Snake venom subfamily. Monomer. As to expression, expressed by the venom gland.

It localises to the secreted. Functionally, snake venom serine protease that may act in the hemostasis system of the prey. The polypeptide is Snake venom serine protease NaSP (Naja atra (Chinese cobra)).